Here is a 335-residue protein sequence, read N- to C-terminus: MTWFTPDVIDAIIAVVKAIVVLLAVVVCGALLSFIERRLLGWWQDRYGPNRVGPFGMFQIAADMLKMFFKEDWTPPFADKVIFTLAPVVAMSALLIAFAVIPITPTWGVADLNIGLLFFFAMAGLSVYAVLFAGWSSNNKFALLGSLRASAQTVSYEVFMGLALMGIVVQVGSFNMRDIVEYQAQNLWFIIPQFFGFCTFFIAGVAVTHRHPFDQPEAEQELADGYHIEYAGMKWGMFFVGEYIGIILISALLVTLFFGGWHGPFDILPSLAFFWFALKTAFFIMLFILLRASIPRPRYDQVMDFSWKFCLPLTLINLLVTAAIVLLNTPAGSVQ.

Helical transmembrane passes span 12 to 32, 81 to 101, 114 to 134, 154 to 174, 187 to 207, 238 to 258, 270 to 290, and 307 to 327; these read IIAVVKAIVVLLAVVVCGALL, VIFTLAPVVAMSALLIAFAVI, IGLLFFFAMAGLSVYAVLFAG, VSYEVFMGLALMGIVVQVGSF, LWFIIPQFFGFCTFFIAGVAV, FFVGEYIGIILISALLVTLFF, SLAFFWFALKTAFFIMLFILL, and WKFCLPLTLINLLVTAAIVLL.

The protein belongs to the complex I subunit 1 family. As to quaternary structure, NDH-1 is composed of 13 different subunits. Subunits NuoA, H, J, K, L, M, N constitute the membrane sector of the complex.

Its subcellular location is the cell inner membrane. The enzyme catalyses a quinone + NADH + 5 H(+)(in) = a quinol + NAD(+) + 4 H(+)(out). Functionally, NDH-1 shuttles electrons from NADH, via FMN and iron-sulfur (Fe-S) centers, to quinones in the respiratory chain. The immediate electron acceptor for the enzyme in this species is believed to be ubiquinone. Couples the redox reaction to proton translocation (for every two electrons transferred, four hydrogen ions are translocated across the cytoplasmic membrane), and thus conserves the redox energy in a proton gradient. This subunit may bind ubiquinone. The protein is NADH-quinone oxidoreductase subunit H of Pseudomonas syringae pv. syringae (strain B728a).